Reading from the N-terminus, the 384-residue chain is BarH-like 2 homeobox protein (384 aa).

3 disordered regions span residues 1–134 (MTAM…APRT), 154–235 (CAPY…ARTA), and 364–384 (PGGQ…PHPR). 2 stretches are compositionally biased toward low complexity: residues 101-110 (VPAQSLQPSP) and 119-134 (QSAA…APRT). Positions 157–175 (YSTSVSSPHHTPKQESNAA) are enriched in polar residues. Residues 177 to 217 (ESFRPKLEQEDGKTKLDKREDPQSDIKCHGTKEEGDREITS) show a composition bias toward basic and acidic residues. The segment at residues 229 to 288 (PRKARTAFSDHQLNQLERSFERQKYLSVQDRMDLAAALNLTDTQVKTWYQNRRTKWKRQT) is a DNA-binding region (homeobox).

The protein belongs to the BAR homeobox family.

The protein localises to the nucleus. Functionally, potential regulator of neural basic helix-loop-helix genes. It may down-regulate expression of ASCL1 and, within the thalamus, up-regulate NGN2, thereby regulating distinct patterns of neuronal differentiation. The protein is BarH-like 2 homeobox protein (Barhl2) of Mus musculus (Mouse).